The primary structure comprises 99 residues: Small ribosomal subunit protein eS24 (99 aa).

It belongs to the eukaryotic ribosomal protein eS24 family.

The chain is Small ribosomal subunit protein eS24 from Pyrococcus horikoshii (strain ATCC 700860 / DSM 12428 / JCM 9974 / NBRC 100139 / OT-3).